The sequence spans 93 residues: Large ribosomal subunit protein eL42 (93 aa).

Residues Cys-11, Cys-14, Cys-72, and Cys-75 each contribute to the Zn(2+) site. The segment at 11 to 75 (CPHCHSHFEH…TDLKYRCSEC (65 aa)) adopts a C4-type zinc-finger fold.

The protein belongs to the eukaryotic ribosomal protein eL42 family. Part of the 50S ribosomal subunit. The cofactor is Zn(2+).

Binds to the 23S rRNA. The sequence is that of Large ribosomal subunit protein eL42 (rpl44e) from Natronomonas pharaonis (strain ATCC 35678 / DSM 2160 / CIP 103997 / JCM 8858 / NBRC 14720 / NCIMB 2260 / Gabara) (Halobacterium pharaonis).